We begin with the raw amino-acid sequence, 588 residues long: Probable fumarate reductase Ifc3 (588 aa).

Residues 1–22 (MKLKYLVSAMALVVLSSGTAMA) form the signal peptide. Residues H31, C37, C40, H41, C58, C61, H62, H78, H81, C87, C90, H91, G93, H94, C101, C104, and H105 each coordinate heme c. The interval 135–588 (AIAAGPSETT…DNAAKHALDK (454 aa)) is flavoprotein-like. A154, D173, N181, S182, G187, and G188 together coordinate FAD. Residue G187 coordinates fumarate. G187 contacts succinate. Residue R218 participates in heme c binding. 2 residues coordinate FAD: V295 and D361. Succinate contacts are provided by H382, S394, and E395. Fumarate-binding residues include S394 and E395. The active-site Proton donor is R419. H521 contributes to the fumarate binding site. Position 521 (H521) interacts with succinate. E551 contacts FAD. Residues R561 and G564 each contribute to the fumarate site. Positions 561 and 564 each coordinate succinate. Residues G564, A566, and I567 each contribute to the FAD site.

As to quaternary structure, homodimer. It depends on FAD as a cofactor. Requires heme c as cofactor.

The protein localises to the periplasm. Its function is as follows. Flavocytochrome that catalyzes the reduction of fumarate to succinate in vitro. Is essentially unidirectional, catalyzing only fumarate reduction. In vitro, can use the artificial electron donor methyl viologen. May be involved in an alternative route for electron transport to Fe(3+). The chain is Probable fumarate reductase Ifc3 from Shewanella frigidimarina (strain NCIMB 400).